A 241-amino-acid chain; its full sequence is Interleukin-6 (241 aa).

The N-terminal stretch at 1-26 is a signal peptide; the sequence is MNSFTSALRPGPLGCSLALLLVVATA. The disordered stretch occupies residues 32–51; it reads PVREDSNTKASPDKTLTPPG. 2 cysteine pairs are disulfide-bonded: Cys-72–Cys-78 and Cys-101–Cys-111. N-linked (GlcNAc...) asparagine glycosylation occurs at Asn-108.

The protein belongs to the IL-6 superfamily. As to quaternary structure, component of a hexamer of two molecules each of IL6, IL6R and IL6ST; first binds to IL6R to associate with the signaling subunit IL6ST. Interacts with IL6R (via the N-terminal ectodomain); this interaction may be affected by IL6R-binding with SORL1, hence decreasing IL6 cis signaling. Interacts with SORL1 (via the N-terminal ectodomain); this interaction leads to IL6 internalization and lysosomal degradation. May form a trimeric complex with the soluble SORL1 ectodomain and soluble IL6R receptor; this interaction might stabilize circulating IL6, hence promoting IL6 trans signaling.

The protein localises to the secreted. Cytokine with a wide variety of biological functions in immunity, tissue regeneration, and metabolism. Binds to IL6R, then the complex associates to the signaling subunit IL6ST/gp130 to trigger the intracellular IL6-signaling pathway. The interaction with the membrane-bound IL6R and IL6ST stimulates 'classic signaling', whereas the binding of IL6 and soluble IL6R to IL6ST stimulates 'trans-signaling'. Alternatively, 'cluster signaling' occurs when membrane-bound IL6:IL6R complexes on transmitter cells activate IL6ST receptors on neighboring receiver cells. Its function is as follows. IL6 is a potent inducer of the acute phase response. Rapid production of IL6 contributes to host defense during infection and tissue injury, but excessive IL6 synthesis is involved in disease pathology. In the innate immune response, is synthesized by myeloid cells, such as macrophages and dendritic cells, upon recognition of pathogens through toll-like receptors (TLRs) at the site of infection or tissue injury. In the adaptive immune response, is required for the differentiation of B cells into immunoglobulin-secreting cells. Plays a major role in the differentiation of CD4(+) T cell subsets. Essential factor for the development of T follicular helper (Tfh) cells that are required for the induction of germinal-center formation. Required to drive naive CD4(+) T cells to the Th17 lineage. Also required for proliferation of myeloma cells and the survival of plasmablast cells. In terms of biological role, acts as an essential factor in bone homeostasis and on vessels directly or indirectly by induction of VEGF, resulting in increased angiogenesis activity and vascular permeability. Induces, through 'trans-signaling' and synergistically with IL1B and TNF, the production of VEGF. Involved in metabolic controls, is discharged into the bloodstream after muscle contraction increasing lipolysis and improving insulin resistance. 'Trans-signaling' in central nervous system also regulates energy and glucose homeostasis. Mediates, through GLP-1, crosstalk between insulin-sensitive tissues, intestinal L cells and pancreatic islets to adapt to changes in insulin demand. Also acts as a myokine. Plays a protective role during liver injury, being required for maintenance of tissue regeneration. Also has a pivotal role in iron metabolism by regulating HAMP/hepcidin expression upon inflammation or bacterial infection. Through activation of IL6ST-YAP-NOTCH pathway, induces inflammation-induced epithelial regeneration. This is Interleukin-6 (IL6) from Oryctolagus cuniculus (Rabbit).